The chain runs to 1171 residues: Phytochrome B (1171 aa).

Positions 1 to 19 are enriched in low complexity; it reads MASGSRATPTRSPSSARPA. The segment at 1–53 is disordered; the sequence is MASGSRATPTRSPSSARPAAPRHQHHHSQSSGGSTSRAGGGGGGGGGGGGGAA. The segment covering 38 to 52 has biased composition (gly residues); the sequence is AGGGGGGGGGGGGGA. Positions 259–442 constitute a GAF domain; that stretch reads DVKLLCDTVV…AFGLQLNMEL (184 aa). Cysteine 364 lines the phytochromobilin pocket. 2 PAS domains span residues 661 to 732 and 795 to 866; these read VARE…LRGD and DYKA…MIVL. One can recognise a Histidine kinase domain in the interval 943–1161; sequence YIYQEIKNPL…FFHIVLELPQ (219 aa).

The protein belongs to the phytochrome family. As to quaternary structure, homodimer. Contains one covalently linked phytochromobilin chromophore.

Regulatory photoreceptor which exists in two forms that are reversibly interconvertible by light: the Pr form that absorbs maximally in the red region of the spectrum and the Pfr form that absorbs maximally in the far-red region. Photoconversion of Pr to Pfr induces an array of morphogenic responses, whereas reconversion of Pfr to Pr cancels the induction of those responses. Pfr controls the expression of a number of nuclear genes including those encoding the small subunit of ribulose-bisphosphate carboxylase, chlorophyll A/B binding protein, protochlorophyllide reductase, rRNA, etc. It also controls the expression of its own gene(s) in a negative feedback fashion. The chain is Phytochrome B (PHYB) from Oryza sativa subsp. indica (Rice).